The chain runs to 316 residues: MTVQPKTIGIVGARGHTGSELIKLVAAHPQLHLSFVSSRELAGQRVAEHNDAYQGQLRYENLDADAVAVKAADVVILALPNGKAAPFVAAIDAATPQTLVIDLSADYRFDPAWYYGLPELTRGSYAGQRRISNPGCYATAMQLTIAPLLDQLAGPPQCFGVSGYSGAGTTPSDKNNPELLSNNLMPYALTNHMHEREVSAQLGVPVEFMPHVAPHFRGITMTVNLWLQQPLTREQIQARYTQRYADEPLIEIVDEAPWVSRIAGKHGVQIGGVTLAPGNKRVVVVATLDNLLKGAATQAMQNLNLALGWDELMAIR.

Residue Cys136 is part of the active site.

This sequence belongs to the NAGSA dehydrogenase family. Type 1 subfamily.

It is found in the cytoplasm. The enzyme catalyses N-acetyl-L-glutamate 5-semialdehyde + phosphate + NADP(+) = N-acetyl-L-glutamyl 5-phosphate + NADPH + H(+). The protein operates within amino-acid biosynthesis; L-arginine biosynthesis; N(2)-acetyl-L-ornithine from L-glutamate: step 3/4. In terms of biological role, catalyzes the NADPH-dependent reduction of N-acetyl-5-glutamyl phosphate to yield N-acetyl-L-glutamate 5-semialdehyde. The polypeptide is N-acetyl-gamma-glutamyl-phosphate reductase (Xanthomonas axonopodis pv. citri (strain 306)).